The chain runs to 403 residues: Serine/threonine transporter SstT (403 aa).

The next 9 helical transmembrane spans lie at 14–34, 44–64, 79–99, 138–158, 175–195, 214–234, 295–315, 327–347, and 353–373; these read VTQI…APAI, VFVS…VMAS, ILWL…VASM, ALLN…GVAL, GVTL…FGLV, LAVL…LIVF, MAGA…TLGI, VVAA…LLLI, and LFGI…IIGV.

This sequence belongs to the dicarboxylate/amino acid:cation symporter (DAACS) (TC 2.A.23) family.

It localises to the cell inner membrane. It carries out the reaction L-serine(in) + Na(+)(in) = L-serine(out) + Na(+)(out). It catalyses the reaction L-threonine(in) + Na(+)(in) = L-threonine(out) + Na(+)(out). In terms of biological role, involved in the import of serine and threonine into the cell, with the concomitant import of sodium (symport system). The polypeptide is Serine/threonine transporter SstT (Pseudomonas putida (strain ATCC 700007 / DSM 6899 / JCM 31910 / BCRC 17059 / LMG 24140 / F1)).